A 309-amino-acid chain; its full sequence is Taste receptor type 2 member 8 (309 aa).

Residues M1–N7 lie on the Extracellular side of the membrane. A helical membrane pass occupies residues I8 to A28. Over L29 to N50 the chain is Cytoplasmic. A helical membrane pass occupies residues L51–L71. Topologically, residues Y72–Q82 are extracellular. A helical membrane pass occupies residues I83–L103. Topologically, residues N104–R131 are cytoplasmic. The helical transmembrane segment at W132–L152 threads the bilayer. Topologically, residues S153–T184 are extracellular. Residue N167 is glycosylated (N-linked (GlcNAc...) asparagine). Residues L185–V205 form a helical membrane-spanning segment. Over R206–S239 the chain is Cytoplasmic. A helical membrane pass occupies residues F240–M260. The Extracellular segment spans residues T261–A266. A helical transmembrane segment spans residues M267 to I287. The Cytoplasmic segment spans residues L288–I309.

Belongs to the G-protein coupled receptor T2R family.

It is found in the membrane. Its function is as follows. Receptor that may play a role in the perception of bitterness and is gustducin-linked. May play a role in sensing the chemical composition of the gastrointestinal content. The activity of this receptor may stimulate alpha gustducin, mediate PLC-beta-2 activation and lead to the gating of TRPM5. In Pongo pygmaeus (Bornean orangutan), this protein is Taste receptor type 2 member 8 (TAS2R8).